Reading from the N-terminus, the 273-residue chain is Dermonecrotic toxin LhSicTox-alphaIA1ii (273 aa).

The active site involves H5. 2 residues coordinate Mg(2+): E25 and D27. The active-site Nucleophile is the H41. 2 disulfide bridges follow: C45–C51 and C47–C190. D85 is a binding site for Mg(2+).

Belongs to the arthropod phospholipase D family. Class II subfamily. It depends on Mg(2+) as a cofactor. Expressed by the venom gland.

It localises to the secreted. It catalyses the reaction an N-(acyl)-sphingosylphosphocholine = an N-(acyl)-sphingosyl-1,3-cyclic phosphate + choline. The catalysed reaction is an N-(acyl)-sphingosylphosphoethanolamine = an N-(acyl)-sphingosyl-1,3-cyclic phosphate + ethanolamine. The enzyme catalyses a 1-acyl-sn-glycero-3-phosphocholine = a 1-acyl-sn-glycero-2,3-cyclic phosphate + choline. It carries out the reaction a 1-acyl-sn-glycero-3-phosphoethanolamine = a 1-acyl-sn-glycero-2,3-cyclic phosphate + ethanolamine. Functionally, dermonecrotic toxins cleave the phosphodiester linkage between the phosphate and headgroup of certain phospholipids (sphingolipid and lysolipid substrates), forming an alcohol (often choline) and a cyclic phosphate. This toxin acts on sphingomyelin (SM). It may also act on ceramide phosphoethanolamine (CPE), lysophosphatidylcholine (LPC) and lysophosphatidylethanolamine (LPE), but not on lysophosphatidylserine (LPS), and lysophosphatidylglycerol (LPG). It acts by transphosphatidylation, releasing exclusively cyclic phosphate products as second products. Induces dermonecrosis, hemolysis, increased vascular permeability, edema, inflammatory response, and platelet aggregation. The protein is Dermonecrotic toxin LhSicTox-alphaIA1ii of Loxosceles hirsuta (Recluse spider).